The primary structure comprises 119 residues: Small ribosomal subunit protein uS10 (119 aa).

Ala2 carries the post-translational modification N-acetylalanine. Residue Lys4 forms a Glycyl lysine isopeptide (Lys-Gly) (interchain with G-Cter in ubiquitin) linkage. Lys8 carries the post-translational modification N6-succinyllysine; alternate. A Glycyl lysine isopeptide (Lys-Gly) (interchain with G-Cter in ubiquitin); alternate cross-link involves residue Lys8. Thr9 is subject to Phosphothreonine. Lys34 and Lys75 each carry N6-acetyllysine. A Phosphoserine modification is found at Ser93.

The protein belongs to the universal ribosomal protein uS10 family. In terms of assembly, component of the 40S small ribosomal subunit. In terms of processing, polyubiquitinated by ZNF598 via 'Lys-63'-linked ubiquitin chains when a ribosome has stalled, initiating the ribosome quality control (RQC) pathway to degrade the potentially detrimental aberrant nascent polypeptide. Deubiquitinated by OTUD3 and USP21, antagonizing ZNF598 activity. Ufmylated by UFL1.

Its subcellular location is the cytoplasm. In terms of biological role, component of the small ribosomal subunit. The ribosome is a large ribonucleoprotein complex responsible for the synthesis of proteins in the cell. In Pongo abelii (Sumatran orangutan), this protein is Small ribosomal subunit protein uS10 (RPS20).